Consider the following 256-residue polypeptide: Ribonuclease 3 (256 aa).

An RNase III domain is found at 6-128 (LATLETRLDH…LFGAVFLDAG (123 aa)). Glutamate 41 is a Mg(2+) binding site. Residue aspartate 45 is part of the active site. Mg(2+)-binding residues include aspartate 114 and glutamate 117. The active site involves glutamate 117. The 71-residue stretch at 155–225 (DAKTLLQEFL…AKVALEAAQA (71 aa)) folds into the DRBM domain.

Belongs to the ribonuclease III family. As to quaternary structure, homodimer. Mg(2+) serves as cofactor.

It is found in the cytoplasm. It carries out the reaction Endonucleolytic cleavage to 5'-phosphomonoester.. In terms of biological role, digests double-stranded RNA. Involved in the processing of primary rRNA transcript to yield the immediate precursors to the large and small rRNAs (23S and 16S). Processes some mRNAs, and tRNAs when they are encoded in the rRNA operon. Processes pre-crRNA and tracrRNA of type II CRISPR loci if present in the organism. The protein is Ribonuclease 3 of Bordetella bronchiseptica (strain ATCC BAA-588 / NCTC 13252 / RB50) (Alcaligenes bronchisepticus).